The sequence spans 282 residues: Bifunctional protein FolD (282 aa).

Residues 166-168 (GAS) and Ile-232 contribute to the NADP(+) site.

Belongs to the tetrahydrofolate dehydrogenase/cyclohydrolase family. As to quaternary structure, homodimer.

The catalysed reaction is (6R)-5,10-methylene-5,6,7,8-tetrahydrofolate + NADP(+) = (6R)-5,10-methenyltetrahydrofolate + NADPH. The enzyme catalyses (6R)-5,10-methenyltetrahydrofolate + H2O = (6R)-10-formyltetrahydrofolate + H(+). It participates in one-carbon metabolism; tetrahydrofolate interconversion. Functionally, catalyzes the oxidation of 5,10-methylenetetrahydrofolate to 5,10-methenyltetrahydrofolate and then the hydrolysis of 5,10-methenyltetrahydrofolate to 10-formyltetrahydrofolate. The polypeptide is Bifunctional protein FolD (Haemophilus influenzae (strain PittEE)).